A 59-amino-acid chain; its full sequence is Protein translocase subunit SecE (59 aa).

A helical transmembrane segment spans residues 39 to 59; it reads VMALFLGLIDALFVALLSFFF.

The protein belongs to the SecE/SEC61-gamma family. As to quaternary structure, component of the Sec protein translocase complex. Heterotrimer consisting of SecY, SecE and SecG subunits. The heterotrimers can form oligomers, although 1 heterotrimer is thought to be able to translocate proteins. Interacts with the ribosome. Interacts with SecDF, and other proteins may be involved. Interacts with SecA.

It localises to the cell inner membrane. Its function is as follows. Essential subunit of the Sec protein translocation channel SecYEG. Clamps together the 2 halves of SecY. May contact the channel plug during translocation. The protein is Protein translocase subunit SecE of Treponema pallidum (strain Nichols).